Reading from the N-terminus, the 753-residue chain is 5-methyltetrahydropteroyltriglutamate--homocysteine methyltransferase (753 aa).

5-methyltetrahydropteroyltri-L-glutamate contacts are provided by residues 17–20 and Lys-117; that span reads RELK. L-homocysteine contacts are provided by residues 431 to 433 and Glu-484; that span reads IGS. Residues 431–433 and Glu-484 contribute to the L-methionine site; that span reads IGS. 5-methyltetrahydropteroyltri-L-glutamate-binding positions include 515–516 and Trp-561; that span reads RC. Asp-599 lines the L-homocysteine pocket. Asp-599 contributes to the L-methionine binding site. Glu-605 serves as a coordination point for 5-methyltetrahydropteroyltri-L-glutamate. 3 residues coordinate Zn(2+): His-641, Cys-643, and Glu-665. His-694 (proton donor) is an active-site residue. Cys-726 serves as a coordination point for Zn(2+).

This sequence belongs to the vitamin-B12 independent methionine synthase family. Requires Zn(2+) as cofactor.

It catalyses the reaction 5-methyltetrahydropteroyltri-L-glutamate + L-homocysteine = tetrahydropteroyltri-L-glutamate + L-methionine. Its pathway is amino-acid biosynthesis; L-methionine biosynthesis via de novo pathway; L-methionine from L-homocysteine (MetE route): step 1/1. Catalyzes the transfer of a methyl group from 5-methyltetrahydrofolate to homocysteine resulting in methionine formation. This Escherichia coli (strain SMS-3-5 / SECEC) protein is 5-methyltetrahydropteroyltriglutamate--homocysteine methyltransferase.